The primary structure comprises 474 residues: Probable aspartate--tRNA ligase, cytoplasmic (474 aa).

Glu203 is a binding site for L-aspartate. Positions 225–228 (QLYK) are aspartate. Arg247 is a binding site for L-aspartate. ATP contacts are provided by residues 247–249 (RAE), 255–257 (RYL), and Glu397. Residues Ser400 and Arg404 each coordinate L-aspartate. Residue 445–448 (GLER) coordinates ATP.

It belongs to the class-II aminoacyl-tRNA synthetase family. Type 2 subfamily. As to quaternary structure, homodimer.

The protein resides in the cytoplasm. The catalysed reaction is tRNA(Asp) + L-aspartate + ATP = L-aspartyl-tRNA(Asp) + AMP + diphosphate. This chain is Probable aspartate--tRNA ligase, cytoplasmic, found in Enterocytozoon bieneusi (strain H348) (Microsporidian parasite).